Consider the following 159-residue polypeptide: Peptide deformylase (159 aa).

Residues cysteine 88 and histidine 130 each coordinate Fe cation. Glutamate 131 is a catalytic residue. Position 134 (histidine 134) interacts with Fe cation.

This sequence belongs to the polypeptide deformylase family. The cofactor is Fe(2+).

The enzyme catalyses N-terminal N-formyl-L-methionyl-[peptide] + H2O = N-terminal L-methionyl-[peptide] + formate. Removes the formyl group from the N-terminal Met of newly synthesized proteins. Requires at least a dipeptide for an efficient rate of reaction. N-terminal L-methionine is a prerequisite for activity but the enzyme has broad specificity at other positions. In Thermoanaerobacter pseudethanolicus (strain ATCC 33223 / 39E) (Clostridium thermohydrosulfuricum), this protein is Peptide deformylase.